We begin with the raw amino-acid sequence, 1322 residues long: Protein fantom (1322 aa).

The first 22 residues, 1–22, serve as a signal peptide directing secretion; sequence MVSARYPIEKWSRPQLEDHFHN. Residues 15 to 89 adopt a coiled-coil conformation; sequence QLEDHFHNVV…MKLKAAKQQL (75 aa). Polar residues predominate over residues 108–119; the sequence is RSTFRQPPSTFR. 3 disordered regions span residues 108–151, 189–275, and 392–418; these read RSTF…GEKL, KSSV…PDQT, and RIEE…SQSE. Low complexity predominate over residues 195–217; that stretch reads SSPPTRLSTSSSSKSSSSNNNND. A compositionally biased stretch (acidic residues) spans 224-234; sequence ELEEMSEMSDD. A coiled-coil region spans residues 274–362; that stretch reads QTEKVLLDKL…EDQKKFEAMR (89 aa). Residues 456-538 are a coiled coil; that stretch reads ASENSLARWQ…FMLEEQIRTI (83 aa). Disordered regions lie at residues 891–1094 and 1121–1149; these read AELH…KPRN and TDPL…PVPL. Low complexity predominate over residues 918–927; that stretch reads TDSSDTSFSH. A compositionally biased stretch (acidic residues) spans 956-975; the sequence is SDGEEEADRIVFDDDDDEIE. The segment covering 984-996 has biased composition (basic and acidic residues); sequence RDPEPLEVPERQV. Residues 1015–1029 show a composition bias toward polar residues; sequence NGTNESKESTPVTQR. Over residues 1042–1067 the composition is skewed to acidic residues; sequence PELEPESGPEPEPVVESEPNEVAETE. The span at 1068–1080 shows a compositional bias: basic and acidic residues; sequence EDRKRELKTEELK. Low complexity predominate over residues 1127 to 1139; sequence SVPPSESSSTSSP.

This sequence belongs to the RPGRIP1 family. Expressed at the transition zone at the base of cilia. Expressed in ciliated sensory neurons, including the amphid neurons in the head.

Its subcellular location is the cell projection. It is found in the cilium. Its function is as follows. Thought to have an important role in cilia formation and cilia-mediated chemosensation. Involved in the docking of other MKS/MKSR proteins localized to the transition zone of the cilia. The sequence is that of Protein fantom (mks-5) from Caenorhabditis elegans.